Here is a 426-residue protein sequence, read N- to C-terminus: Serine--tRNA ligase (426 aa).

233–235 (TAE) contacts L-serine. 264–266 (RSE) contacts ATP. Residue Glu287 participates in L-serine binding. An ATP-binding site is contributed by 351 to 354 (EISS). Ser387 serves as a coordination point for L-serine.

This sequence belongs to the class-II aminoacyl-tRNA synthetase family. Type-1 seryl-tRNA synthetase subfamily. Homodimer. The tRNA molecule binds across the dimer.

The protein resides in the cytoplasm. It catalyses the reaction tRNA(Ser) + L-serine + ATP = L-seryl-tRNA(Ser) + AMP + diphosphate + H(+). The enzyme catalyses tRNA(Sec) + L-serine + ATP = L-seryl-tRNA(Sec) + AMP + diphosphate + H(+). Its pathway is aminoacyl-tRNA biosynthesis; selenocysteinyl-tRNA(Sec) biosynthesis; L-seryl-tRNA(Sec) from L-serine and tRNA(Sec): step 1/1. Its function is as follows. Catalyzes the attachment of serine to tRNA(Ser). Is also able to aminoacylate tRNA(Sec) with serine, to form the misacylated tRNA L-seryl-tRNA(Sec), which will be further converted into selenocysteinyl-tRNA(Sec). The polypeptide is Serine--tRNA ligase (Clostridium botulinum (strain 657 / Type Ba4)).